Consider the following 513-residue polypeptide: GMP synthase [glutamine-hydrolyzing] (513 aa).

One can recognise a Glutamine amidotransferase type-1 domain in the interval 3 to 200 (SVLVLDFGSQ…LITIAGITPD (198 aa)). The Nucleophile role is filled by Cys-80. Active-site residues include His-174 and Glu-176. Residues 201–388 (WSSKSFIEHQ…LGIAEDILMR (188 aa)) form the GMPS ATP-PPase domain. 228–234 (SGGVDST) contacts ATP.

As to quaternary structure, homodimer.

It carries out the reaction XMP + L-glutamine + ATP + H2O = GMP + L-glutamate + AMP + diphosphate + 2 H(+). The protein operates within purine metabolism; GMP biosynthesis; GMP from XMP (L-Gln route): step 1/1. Functionally, catalyzes the synthesis of GMP from XMP. In Pelodictyon phaeoclathratiforme (strain DSM 5477 / BU-1), this protein is GMP synthase [glutamine-hydrolyzing].